Here is a 454-residue protein sequence, read N- to C-terminus: Bifunctional protein GlmU (454 aa).

Residues 1–240 (MNVSVVILAA…EEEFMGVNSK (240 aa)) form a pyrophosphorylase region. UDP-N-acetyl-alpha-D-glucosamine is bound by residues 8-11 (LAAG), Lys-22, and 87-88 (GT). Residue Asp-119 participates in Mg(2+) binding. The UDP-N-acetyl-alpha-D-glucosamine site is built by Gly-152, Glu-166, Asn-181, and Asn-238. Asn-238 provides a ligand contact to Mg(2+). A linker region spans residues 241–261 (IQLACAQEIMLQRLREKAMEQ). The segment at 262-454 (GVIMNLPHTI…SDKNEEKKEQ (193 aa)) is N-acetyltransferase. The UDP-N-acetyl-alpha-D-glucosamine site is built by Arg-325 and Lys-342. His-353 serves as the catalytic Proton acceptor. UDP-N-acetyl-alpha-D-glucosamine is bound by residues Tyr-356 and Asn-367. Acetyl-CoA contacts are provided by residues Ala-370, 376-377 (NY), Ser-395, Ala-413, and Arg-430.

This sequence in the N-terminal section; belongs to the N-acetylglucosamine-1-phosphate uridyltransferase family. In the C-terminal section; belongs to the transferase hexapeptide repeat family. As to quaternary structure, homotrimer. The cofactor is Mg(2+).

It localises to the cytoplasm. It carries out the reaction alpha-D-glucosamine 1-phosphate + acetyl-CoA = N-acetyl-alpha-D-glucosamine 1-phosphate + CoA + H(+). The catalysed reaction is N-acetyl-alpha-D-glucosamine 1-phosphate + UTP + H(+) = UDP-N-acetyl-alpha-D-glucosamine + diphosphate. Its pathway is nucleotide-sugar biosynthesis; UDP-N-acetyl-alpha-D-glucosamine biosynthesis; N-acetyl-alpha-D-glucosamine 1-phosphate from alpha-D-glucosamine 6-phosphate (route II): step 2/2. The protein operates within nucleotide-sugar biosynthesis; UDP-N-acetyl-alpha-D-glucosamine biosynthesis; UDP-N-acetyl-alpha-D-glucosamine from N-acetyl-alpha-D-glucosamine 1-phosphate: step 1/1. It functions in the pathway bacterial outer membrane biogenesis; LPS lipid A biosynthesis. Catalyzes the last two sequential reactions in the de novo biosynthetic pathway for UDP-N-acetylglucosamine (UDP-GlcNAc). The C-terminal domain catalyzes the transfer of acetyl group from acetyl coenzyme A to glucosamine-1-phosphate (GlcN-1-P) to produce N-acetylglucosamine-1-phosphate (GlcNAc-1-P), which is converted into UDP-GlcNAc by the transfer of uridine 5-monophosphate (from uridine 5-triphosphate), a reaction catalyzed by the N-terminal domain. This chain is Bifunctional protein GlmU, found in Helicobacter hepaticus (strain ATCC 51449 / 3B1).